The sequence spans 484 residues: Tribbles (484 aa).

Residues 1 to 23 show a composition bias toward polar residues; that stretch reads MDNSSGQNSRTASSASTSKIVNY. Positions 1-51 are disordered; sequence MDNSSGQNSRTASSASTSKIVNYSSPVSPGVAAATSSSSSSSSSGMSSSQE. Positions 24 to 49 are enriched in low complexity; sequence SSPVSPGVAAATSSSSSSSSSGMSSS. Residues 129 to 397 form the Protein kinase domain; sequence YRHLVDLTAS…ASHIFLTPWL (269 aa). Acidic residues-rich tracts occupy residues 420-437 and 475-484; these read AEED…DEEG and PEPDTDVDMG. Disordered regions lie at residues 420 to 443 and 464 to 484; these read AEED…PLGD and MAQN…VDMG.

It belongs to the protein kinase superfamily. CAMK Ser/Thr protein kinase family. Tribbles subfamily. In terms of assembly, interacts with slbo. Interacts with Akt1. As to expression, expressed throughout the brain with highest levels of expression detected in the cell body rind and lower levels of expression detected in the neurophil (at protein level).

It localises to the nucleus. Its subcellular location is the cytoplasm. It is found in the cell cortex. Functionally, adapter protein that negatively regulates different signaling pathways to coordinate cell differentiation, proliferation, migration and growth. Functions by binding to key regulatory proteins and either blocks their activity or regulates their turnover by the proteasome. In various developing tissues functions as a cell cycle regulator that mediates cell proliferation according to the requirements of the developmental program. Acts by inducing the proteasomal degradation of the CD25 mitotic activators stg and twe at critical stages of development to delay entry into mitosis and thus mediate cell proliferation. During gastrulation, negatively regulates stg to delay mitosis in the ventral region of the embryonic mesoderm thus allowing invagination to be completed before cell division takes place. Delaying stg-dependent mitosis during bristle development and in migrating germline pole cells also arrests their cell divisions, whereas in cystocytes it promotes their cell divisions. Involved in the regulation of the mid-blastula transition; promotes the destruction of twe resulting in the cell cycle arrest in G2 of cycle 14 which delays mitosis and thus reduces cell proliferation allowing cell fate specification and morphogenesis to take place. In germline cells, blocks border cell migration during oogenesis by binding to slbo/C/EBP and promoting its ubiquitination and degradation by the proteasome. May function in a negative feedback loop with slbo to coordinate proper border cell migration. During tissue growth negatively regulates insulin signaling by binding to Akt1 and blocking its phosphorylation-dependent activation. However it may also function downstream in the insulin signaling pathway, acting with Akt1 to direct foxo degradation. Essential for the proper formation of operant place and aversive olfactory memories. The protein is Tribbles of Drosophila melanogaster (Fruit fly).